Consider the following 678-residue polypeptide: Pescadillo homolog (678 aa).

Acidic residues predominate over residues 283-303 (EEEEPEEVDSEAGDEDDDDLP). The interval 283–316 (EEEEPEEVDSEAGDEDDDDLPVLDSGTRRRRAAA) is disordered. Positions 361–451 (VCGSLFRGRV…VLMPTDLYAP (91 aa)) constitute a BRCT domain. A coiled-coil region spans residues 552 to 587 (MTRKARKMYNNMKQKEAAKQERVQQLESKKAKLAAT). The disordered stretch occupies residues 563-678 (MKQKEAAKQE…DAAPAKRQRR (116 aa)). Over residues 564–581 (KQKEAAKQERVQQLESKK) the composition is skewed to basic and acidic residues. 2 stretches are compositionally biased toward low complexity: residues 597–618 (KPAA…VAAS) and 630–661 (APAP…AAKE). The span at 662–672 (APAKGGKDAAP) shows a compositional bias: basic and acidic residues.

The protein belongs to the pescadillo family.

Its subcellular location is the nucleus. The protein localises to the nucleolus. It localises to the nucleoplasm. In terms of biological role, required for maturation of ribosomal RNAs and formation of the large ribosomal subunit. This chain is Pescadillo homolog, found in Chlamydomonas reinhardtii (Chlamydomonas smithii).